A 638-amino-acid polypeptide reads, in one-letter code: Neuroendocrine convertase 2 (638 aa).

Residues 1 to 25 (MKGGCVSQWKAAAGFLFCVMVFASA) form the signal peptide. A propeptide spanning residues 26-109 (ERPVFTNHFL…QQEGFDRKKR (84 aa)) is cleaved from the precursor. The Peptidase S8 domain occupies 129–453 (QWYLINTGQA…YGVLDAGAMV (325 aa)). Residues aspartate 167 and histidine 208 each act as charge relay system in the active site. 2 disulfide bridges follow: cysteine 225/cysteine 376 and cysteine 317/cysteine 347. N-linked (GlcNAc...) asparagine glycosylation is present at asparagine 375. Serine 384 functions as the Charge relay system in the catalytic mechanism. The P/Homo B domain occupies 461–597 (TVPERFHCVG…TLMLHGTQSA (137 aa)). An intrachain disulfide couples cysteine 468 to cysteine 494. N-linked (GlcNAc...) asparagine glycosylation is found at asparagine 514 and asparagine 524.

It belongs to the peptidase S8 family. Furin subfamily.

Its subcellular location is the cytoplasmic vesicle. The protein localises to the secretory vesicle. It localises to the secreted. The catalysed reaction is Release of protein hormones and neuropeptides from their precursors, generally by hydrolysis of -Lys-Arg-|- bonds.. Serine endopeptidase which is involved in the processing of hormone and other protein precursors at sites comprised of pairs of basic amino acid residues. Responsible for the release of glucagon from proglucagon in pancreatic A cells. This Homo sapiens (Human) protein is Neuroendocrine convertase 2 (PCSK2).